A 665-amino-acid chain; its full sequence is RNA-directed RNA polymerase (665 aa).

A RdRp catalytic domain is found at 310 to 485 (NKEEKVKEWS…LKEGKVNPSP (176 aa)). Residues D454, Y491, and G495 each coordinate Mg(2+).

Part of the packaging complex composed of RDRP, P4 and P7. Interacts with P7. Mg(2+) serves as cofactor. Mn(2+) is required as a cofactor.

Its subcellular location is the virion. The enzyme catalyses RNA(n) + a ribonucleoside 5'-triphosphate = RNA(n+1) + diphosphate. Functionally, rna-dependent RNA polymerase part of the packaging complex that packages the viral RNA segments, replicate them into a double-stranded form and transcribe them. The chain is RNA-directed RNA polymerase (P2) from Pseudomonas phage phi6 (Bacteriophage phi-6).